Here is a 307-residue protein sequence, read N- to C-terminus: MTDSTYDVNRVRAYLQGLQMRIADALGAFDGTPLAADTWRRGPGERLRGGGCTRILEAGGFFERAGIGFSDVAGDALPPSANASRPQLAGRGFEALGVSLVLHPRNPYCPTVHMNVRMLIATKPGEAPVFWFGGGMDLTPIYGFEEDARHFHRTCRAALEPFGAELYPRFKKWCDDYFFLKHRNEARGIGGIFFDDFSELGFERSFEMLQSVGDAFLPSYLPIVERRRDTPYGERERAFQAYRRGRYVEFNLVFDRGTLFGLQSGGRTESILLSMPPTAGWRYDWHPDPGTPEARLQSEFLVPRDWA.

Substrate is bound at residue Ser99. Residues His103 and His113 each contribute to the a divalent metal cation site. Residue His113 is the Proton donor of the active site. 115-117 (NVR) contacts substrate. Residues His152 and His182 each coordinate a divalent metal cation. The important for dimerization stretch occupies residues 247–282 (YVEFNLVFDRGTLFGLQSGGRTESILLSMPPTAGWR). 265–267 (GGR) serves as a coordination point for substrate.

Belongs to the aerobic coproporphyrinogen-III oxidase family. As to quaternary structure, homodimer. A divalent metal cation serves as cofactor.

Its subcellular location is the cytoplasm. The catalysed reaction is coproporphyrinogen III + O2 + 2 H(+) = protoporphyrinogen IX + 2 CO2 + 2 H2O. Its pathway is porphyrin-containing compound metabolism; protoporphyrin-IX biosynthesis; protoporphyrinogen-IX from coproporphyrinogen-III (O2 route): step 1/1. Involved in the heme biosynthesis. Catalyzes the aerobic oxidative decarboxylation of propionate groups of rings A and B of coproporphyrinogen-III to yield the vinyl groups in protoporphyrinogen-IX. This Burkholderia mallei (strain SAVP1) protein is Oxygen-dependent coproporphyrinogen-III oxidase.